The following is a 394-amino-acid chain: Elongation factor Tu (394 aa).

Positions 10 to 204 (KPHVNVGTIG…ALDTYIPEPE (195 aa)) constitute a tr-type G domain. Residues 19–26 (GHVDHGKT) are G1. Residue 19-26 (GHVDHGKT) participates in GTP binding. Position 26 (T26) interacts with Mg(2+). The interval 60 to 64 (GITIN) is G2. A G3 region spans residues 81–84 (DCPG). GTP-binding positions include 81–85 (DCPGH) and 136–139 (NKCD). Residues 136–139 (NKCD) form a G4 region. A G5 region spans residues 174–176 (SAL).

It belongs to the TRAFAC class translation factor GTPase superfamily. Classic translation factor GTPase family. EF-Tu/EF-1A subfamily. Monomer.

Its subcellular location is the cytoplasm. The enzyme catalyses GTP + H2O = GDP + phosphate + H(+). In terms of biological role, GTP hydrolase that promotes the GTP-dependent binding of aminoacyl-tRNA to the A-site of ribosomes during protein biosynthesis. This is Elongation factor Tu from Colwellia psychrerythraea (strain 34H / ATCC BAA-681) (Vibrio psychroerythus).